The following is a 289-amino-acid chain: Mitochondrial fission regulator 1-like (289 aa).

T27 carries the post-translational modification Phosphothreonine. Residues S38, S100, S107, S221, S222, S235, S258, and S270 each carry the phosphoserine modification.

The protein belongs to the MTFR1 family. Phosphorylated by AMPK. Upon stress, phosphorylation by AMPK is sufficient to induce mitochondrial fragmentation.

It is found in the mitochondrion outer membrane. Mitochondrial protein required for adaptation of miochondrial dynamics to metabolic changes. Regulates mitochondrial morphology at steady state and mediates AMPK-dependent stress-induced mitochondrial fragmentation via the control of OPA1 levels. This chain is Mitochondrial fission regulator 1-like (Mtfr1l), found in Rattus norvegicus (Rat).